Here is a 285-residue protein sequence, read N- to C-terminus: Dermonecrotic toxin LiSicTox-alphaIA2aii (285 aa).

Positions 1 to 5 (DVEER) are excised as a propeptide. The active site involves His17. 2 residues coordinate Mg(2+): Glu37 and Asp39. The Nucleophile role is filled by His53. Disulfide bonds link Cys57–Cys63 and Cys59–Cys202. Mg(2+) is bound at residue Asp97. Asn262 is a glycosylation site (N-linked (GlcNAc...) asparagine).

This sequence belongs to the arthropod phospholipase D family. Class II subfamily. Class IIa sub-subfamily. It depends on Mg(2+) as a cofactor. Expressed by the venom gland.

Its subcellular location is the secreted. It catalyses the reaction an N-(acyl)-sphingosylphosphocholine = an N-(acyl)-sphingosyl-1,3-cyclic phosphate + choline. It carries out the reaction an N-(acyl)-sphingosylphosphoethanolamine = an N-(acyl)-sphingosyl-1,3-cyclic phosphate + ethanolamine. The catalysed reaction is a 1-acyl-sn-glycero-3-phosphocholine = a 1-acyl-sn-glycero-2,3-cyclic phosphate + choline. The enzyme catalyses a 1-acyl-sn-glycero-3-phosphoethanolamine = a 1-acyl-sn-glycero-2,3-cyclic phosphate + ethanolamine. Dermonecrotic toxins cleave the phosphodiester linkage between the phosphate and headgroup of certain phospholipids (sphingolipid and lysolipid substrates), forming an alcohol (often choline) and a cyclic phosphate. This toxin acts on sphingomyelin (SM) with high activity. It may also act on ceramide phosphoethanolamine (CPE), lysophosphatidylcholine (LPC) and lysophosphatidylethanolamine (LPE), but not on lysophosphatidylserine (LPS), and lysophosphatidylglycerol (LPG). It acts by transphosphatidylation, releasing exclusively cyclic phosphate products as second products. Shows high hemolytic activity. Induces dermonecrosis, vascular permeability, edema, inflammatory response, and platelet aggregation. Also shows cytotoxicity against renal epithelial cells. In addition, also induces hemolysis in a complement-dependent manner and probably also in a complement-independent manner. The hemolysis provoked in a complement-independent manner may be composed of several steps. The toxin may bind to erythrocyte membranes, may hydrolyze membrane phospholipids (SM and LPC) thus generating metabolism products that may cause hemolysis, probably by provoking an increase of calcium inside cells. The calcium influx may be due to the opening of L-type calcium channels, since L-type calcium channel blockers inhibit calcium influx. In vivo, is lethal to mice when intraperitoneally injected. This chain is Dermonecrotic toxin LiSicTox-alphaIA2aii, found in Loxosceles intermedia (Brown spider).